The sequence spans 129 residues: Protachykinin-1 (129 aa).

A signal peptide spans 1-19 (MKILVALAVFFLVSTQLFA). Residues 20-56 (EEIGANDDLNYWSDWYDSDQIKEELPEPFEHLLQRIA) constitute a propeptide that is removed on maturation. Methionine amide is present on residues M68 and M107.

The protein belongs to the tachykinin family. The substance P form is cleaved at Pro-59 by the prolyl endopeptidase FAP (seprase) activity (in vitro). Substance P is also cleaved and degraded by Angiotensin-converting enzyme (ACE) and neprilysin (MME).

Its subcellular location is the secreted. Functionally, tachykinins are active peptides which excite neurons, evoke behavioral responses, are potent vasodilators and secretagogues, and contract (directly or indirectly) many smooth muscles. The chain is Protachykinin-1 (TAC1) from Homo sapiens (Human).